Here is a 601-residue protein sequence, read N- to C-terminus: Kelch repeat and BTB domain-containing protein 8 (601 aa).

The segment at M1–D25 is disordered. Over residues L7–P22 the composition is skewed to polar residues. One can recognise a BTB domain in the interval T49 to E117. One can recognise a BACK domain in the interval I153–K252. 5 Kelch repeats span residues D336–G390, K391–E441, I443–D481, I483–N532, and Q542–A588.

This sequence belongs to the KBTBD8 family. In terms of assembly, component of the BCR(KBTBD8) E3 ubiquitin ligase complex, at least composed of CUL3, KBTBD8 and RBX1.

The protein resides in the cytoplasm. It localises to the cytoskeleton. Its subcellular location is the spindle. It is found in the golgi apparatus. Functionally, substrate-specific adapter of a BCR (BTB-CUL3-RBX1) E3 ubiquitin ligase complex that acts as a regulator of neural crest specification. The BCR(KBTBD8) complex acts by mediating monoubiquitination of NOLC1 and TCOF1: monoubiquitination promotes the formation of a NOLC1-TCOF1 complex that acts as a platform to connect RNA polymerase I with enzymes responsible for ribosomal processing and modification, leading to remodel the translational program of differentiating cells in favor of neural crest specification. This Homo sapiens (Human) protein is Kelch repeat and BTB domain-containing protein 8 (KBTBD8).